Consider the following 887-residue polypeptide: Bifunctional uridylyltransferase/uridylyl-removing enzyme (887 aa).

The interval 1-337 is uridylyltransferase; it reads MINTSPLLNY…RLPNYERKIE (337 aa). The interval 339–699 is uridylyl-removing; that stretch reads VNDHFKIVDN…AHRKAAQDAV (361 aa). An HD domain is found at 457-579; sequence VDAHTLLLLR…LGDMEHLDYL (123 aa). 2 ACT domains span residues 700 to 782 and 809 to 887; these read QIFI…LMQR and MVEI…ICQH.

Belongs to the GlnD family. Mg(2+) serves as cofactor.

The enzyme catalyses [protein-PII]-L-tyrosine + UTP = [protein-PII]-uridylyl-L-tyrosine + diphosphate. It catalyses the reaction [protein-PII]-uridylyl-L-tyrosine + H2O = [protein-PII]-L-tyrosine + UMP + H(+). With respect to regulation, uridylyltransferase (UTase) activity is inhibited by glutamine, while glutamine activates uridylyl-removing (UR) activity. Modifies, by uridylylation and deuridylylation, the PII regulatory proteins (GlnB and homologs), in response to the nitrogen status of the cell that GlnD senses through the glutamine level. Under low glutamine levels, catalyzes the conversion of the PII proteins and UTP to PII-UMP and PPi, while under higher glutamine levels, GlnD hydrolyzes PII-UMP to PII and UMP (deuridylylation). Thus, controls uridylylation state and activity of the PII proteins, and plays an important role in the regulation of nitrogen assimilation and metabolism. The protein is Bifunctional uridylyltransferase/uridylyl-removing enzyme of Acinetobacter baumannii (strain AB307-0294).